The chain runs to 87 residues: Class II metallothionein-like protein 1A (87 aa).

Belongs to the metallothionein superfamily. Type 15 family. Expressed in developing seeds.

Functionally, metallothioneins have a high content of cysteine residues that bind various heavy metals. This Oryza sativa subsp. japonica (Rice) protein is Class II metallothionein-like protein 1A (MT21A).